We begin with the raw amino-acid sequence, 150 residues long: Large ribosomal subunit protein uL13 (150 aa).

Positions 130 to 150 are disordered; that stretch reads EHPHGAQQPQPYQLNPSASIK. Polar residues predominate over residues 136-150; the sequence is QQPQPYQLNPSASIK.

This sequence belongs to the universal ribosomal protein uL13 family. Part of the 50S ribosomal subunit.

Its function is as follows. This protein is one of the early assembly proteins of the 50S ribosomal subunit, although it is not seen to bind rRNA by itself. It is important during the early stages of 50S assembly. The polypeptide is Large ribosomal subunit protein uL13 (Synechococcus sp. (strain RCC307)).